A 295-amino-acid polypeptide reads, in one-letter code: Transcriptional regulator SirC (295 aa).

Residues 195 to 292 (EKVYNIIISD…KITPLSFMRT (98 aa)) form the HTH araC/xylS-type domain. 2 consecutive DNA-binding regions (H-T-H motif) follow at residues 212-233 (AEVAGKLFMSVSSLKRKLAAEE) and 259-282 (ISQVATMCGYDTPSYFIAIFKRHF).

In terms of biological role, positive regulator of the expression of the invasion-associated type III secretion system encoded within SPI-1 (pathogenicity island 1). The polypeptide is Transcriptional regulator SirC (sirC) (Salmonella typhi).